Reading from the N-terminus, the 1022-residue chain is Sodium/potassium-transporting ATPase subunit alpha-1 (1022 aa).

A propeptide spanning residues 1–5 (MGRGT) is cleaved from the precursor. Residues 1 to 10 (MGRGTGHDQY) are compositionally biased toward basic and acidic residues. The tract at residues 1 to 34 (MGRGTGHDQYELAATSEGGRKKKRDKKKKDMDDL) is disordered. Residues 6–86 (GHDQYELAAT…NALTPPPTTP (81 aa)) are Cytoplasmic-facing. S16 carries the post-translational modification Phosphoserine; by PKC. The segment at 81-83 (PPP) is interaction with phosphoinositide-3 kinase. The chain crosses the membrane as a helical span at residues 87-107 (EWVKFCRQLFGGFSMLLWIGA). The Extracellular segment spans residues 108 to 130 (ILCFLAYGIQAASEDEPANDNLY). The helical transmembrane segment at 131–151 (LGVVLSAVVIITGCFSYYQEA) threads the bilayer. Topologically, residues 152–287 (KSSRIMDSFK…VGRTPISIEI (136 aa)) are cytoplasmic. The interval 213-234 (DNSSLTGESEPQTRSPDFSNEN) is disordered. The helical transmembrane segment at 288–307 (EHFIHIITGVAVFLGVSFFI) threads the bilayer. Residues 308–319 (LSLILGYAWLEA) lie on the Extracellular side of the membrane. The chain crosses the membrane as a helical span at residues 320 to 337 (VIFLIGIIVANVPEGLLA). The Cytoplasmic segment spans residues 338-771 (TVTVCLTLTA…EEGRLIFDNL (434 aa)). D375 functions as the 4-aspartylphosphate intermediate in the catalytic mechanism. Residue K486 coordinates ATP. Positions 716 and 720 each coordinate Mg(2+). The helical transmembrane segment at 772–791 (KKSIAYTLTSNIPEITPFLL) threads the bilayer. Topologically, residues 792–801 (FIIANIPLPL) are extracellular. The helical transmembrane segment at 802–822 (GTVTILCIDLGTDMVPAISLA) threads the bilayer. Over 823 to 842 (YEAAESDIMKRQPRNPRTDK) the chain is Cytoplasmic. The chain crosses the membrane as a helical span at residues 843–865 (LVNERLISIAYGQIGMMQATAGF). Residues 866–917 (FTYFVILAENGFLPSTLLGIRVKWDDKYVNDLEDSYGQQWTYEQRKIVEYTC) lie on the Extracellular side of the membrane. The chain crosses the membrane as a helical span at residues 918–937 (HTSFFASIVIVQWADLIICK). Over 938–950 (TRRNSIIQQGMKN) the chain is Cytoplasmic. S942 is subject to Phosphoserine; by PKA. Residues 951 to 969 (KILIFGLFEETALAAFLSY) form a helical membrane-spanning segment. The Extracellular segment spans residues 970-984 (CPGMDVALRMYPLKP). The helical transmembrane segment at 985–1005 (SWWFCAFPYSLLIFLYDEARR) threads the bilayer. Over 1006–1022 (FILRRNPDGWVERETYY) the chain is Cytoplasmic.

Belongs to the cation transport ATPase (P-type) (TC 3.A.3) family. Type IIC subfamily. The sodium/potassium-transporting ATPase is composed of a catalytic alpha subunit, an auxiliary non-catalytic beta subunit and an additional regulatory subunit.

The protein resides in the cell membrane. It is found in the sarcolemma. It carries out the reaction K(+)(out) + Na(+)(in) + ATP + H2O = K(+)(in) + Na(+)(out) + ADP + phosphate + H(+). Its function is as follows. This is the catalytic component of the active enzyme, which catalyzes the hydrolysis of ATP coupled with the exchange of sodium and potassium ions across the plasma membrane. This action creates the electrochemical gradient of sodium and potassium ions, providing the energy for active transport of various nutrients. This Anguilla anguilla (European freshwater eel) protein is Sodium/potassium-transporting ATPase subunit alpha-1 (atp1a1).